We begin with the raw amino-acid sequence, 585 residues long: Protein FAM151A (585 aa).

A helical membrane pass occupies residues 14–34 (WVFASITCVSAVAIAAIVLAI).

The protein belongs to the menorin family.

It localises to the membrane. In Pongo abelii (Sumatran orangutan), this protein is Protein FAM151A (FAM151A).